The following is a 525-amino-acid chain: GMP synthase [glutamine-hydrolyzing] (525 aa).

The region spanning 8-207 (KILILDFGSQ…ALDICGCAAN (200 aa)) is the Glutamine amidotransferase type-1 domain. The active-site Nucleophile is the Cys85. Catalysis depends on residues His181 and Glu183. Residues 208-400 (WKPSSIIEDA…LGLPYNMLYR (193 aa)) enclose the GMPS ATP-PPase domain. ATP is bound at residue 235–241 (SGGVDSS).

As to quaternary structure, homodimer.

The enzyme catalyses XMP + L-glutamine + ATP + H2O = GMP + L-glutamate + AMP + diphosphate + 2 H(+). Its pathway is purine metabolism; GMP biosynthesis; GMP from XMP (L-Gln route): step 1/1. In terms of biological role, catalyzes the synthesis of GMP from XMP. This is GMP synthase [glutamine-hydrolyzing] from Shewanella baltica (strain OS223).